The sequence spans 375 residues: Growth/differentiation factor 8 (375 aa).

The N-terminal stretch at 1 to 18 is a signal peptide; sequence MQKLQISVYIYLFMLIVA. Residues 19 to 266 constitute a propeptide that is removed on maturation; the sequence is GPVDLNENSE…VTDTPKRSRR (248 aa). Residues asparagine 47 and asparagine 71 are each glycosylated (N-linked (GlcNAc...) asparagine). 4 cysteine pairs are disulfide-bonded: cysteine 272–cysteine 282, cysteine 281–cysteine 340, cysteine 309–cysteine 372, and cysteine 313–cysteine 374.

This sequence belongs to the TGF-beta family. As to quaternary structure, homodimer; disulfide-linked. Interacts with WFIKKN2, leading to inhibit its activity. Interacts with FSTL3. In terms of processing, synthesized as large precursor molecule that undergoes proteolytic cleavage to generate an N-terminal propeptide and a disulfide linked C-terminal dimer, which is the biologically active molecule. The circulating form consists of a latent complex of the C-terminal dimer and other proteins, including its propeptide, which maintain the C-terminal dimer in a latent, inactive state. Ligand activation requires additional cleavage of the prodomain by a tolloid-like metalloproteinase.

It localises to the secreted. Acts specifically as a negative regulator of skeletal muscle growth. The protein is Growth/differentiation factor 8 (MSTN) of Bubalus bubalis (Domestic water buffalo).